Consider the following 246-residue polypeptide: Homeobox protein SIX6 (246 aa).

The homeobox DNA-binding region spans 126 to 186; the sequence is WDGEQKTHCF…KNRRQRDRAA (61 aa). The tract at residues 190 to 246 is disordered; the sequence is NRLQQQVLSQGPGRVLRSEGEGTPEVLGVASSPAASLSSKAATSAISITSSDSECDI. The residue at position 212 (threonine 212) is a Phosphothreonine. Residues 219-246 show a composition bias toward low complexity; sequence ASSPAASLSSKAATSAISITSSDSECDI. Phosphoserine is present on residues serine 221, serine 225, serine 227, and serine 228.

The protein belongs to the SIX/Sine oculis homeobox family. Interacts with TLE4 and TLE5. In terms of tissue distribution, in the developing embryo, expressed mainly in the ventral optic stalk, optic chiasma, the neural retina and the primordial tissues that give rise to the pituitary/hypothalamus axis. Not expressed in the lens placode.

The protein resides in the nucleus. May be involved in eye development. The chain is Homeobox protein SIX6 (Six6) from Mus musculus (Mouse).